We begin with the raw amino-acid sequence, 192 residues long: Probable cobalt-precorrin-6B C(15)-methyltransferase (decarboxylating) (192 aa).

S-adenosyl-L-methionine is bound by residues Thr17, 41–45 (GCGTG), Asp62, and Ala91.

The protein belongs to the methyltransferase superfamily. Archaeal-type CbiT family. As to quaternary structure, homotetramer.

It carries out the reaction Co-precorrin-6B + S-adenosyl-L-methionine = Co-precorrin-7 + S-adenosyl-L-homocysteine + CO2. It functions in the pathway cofactor biosynthesis; adenosylcobalamin biosynthesis; cob(II)yrinate a,c-diamide from sirohydrochlorin (anaerobic route): step 8/10. In terms of biological role, catalyzes the methylation of C-15 in cobalt-precorrin-6B followed by the decarboxylation of C-12 to form cobalt-precorrin-7. This is Probable cobalt-precorrin-6B C(15)-methyltransferase (decarboxylating) from Methanothermobacter thermautotrophicus (strain ATCC 29096 / DSM 1053 / JCM 10044 / NBRC 100330 / Delta H) (Methanobacterium thermoautotrophicum).